A 70-amino-acid polypeptide reads, in one-letter code: Probable protein transport protein Sec61 subunit gamma (70 aa).

At 1–33 the chain is on the cytoplasmic side; the sequence is MADNADDLFQIPKNFYKEGSHFIKRCVKPDRKE. Residues 34 to 62 form a helical membrane-spanning segment; the sequence is FLSISKAVATGFVLMGLIGYIIKLIHIPI. Residues 63–70 lie on the Extracellular side of the membrane; it reads NKVLVGGA.

The protein belongs to the SecE/SEC61-gamma family. Heterotrimeric complex composed of SEC61-alpha, SEC61-beta and SEC61-gamma.

The protein resides in the endoplasmic reticulum membrane. Its function is as follows. Necessary for protein translocation in the endoplasmic reticulum. The protein is Probable protein transport protein Sec61 subunit gamma (sss1) of Schizosaccharomyces pombe (strain 972 / ATCC 24843) (Fission yeast).